Here is a 193-residue protein sequence, read N- to C-terminus: A-type ATP synthase subunit E (193 aa).

It belongs to the V-ATPase E subunit family. In terms of assembly, has multiple subunits with at least A(3), B(3), C, D, E, F, H, I and proteolipid K(x).

Its subcellular location is the cell membrane. Its function is as follows. Component of the A-type ATP synthase that produces ATP from ADP in the presence of a proton gradient across the membrane. The chain is A-type ATP synthase subunit E from Haloquadratum walsbyi (strain DSM 16790 / HBSQ001).